We begin with the raw amino-acid sequence, 380 residues long: Chaperone protein DnaJ (380 aa).

In terms of domain architecture, J spans 5 to 69 (DYYEILGVSK…QKRAHYDQFG (65 aa)). The CR-type zinc finger occupies 135–217 (GKETDIEIPR…CGGTGRVKKR (83 aa)). Zn(2+) is bound by residues Cys148, Cys151, Cys165, Cys168, Cys191, Cys194, Cys205, and Cys208. CXXCXGXG motif repeat units follow at residues 148–155 (CDTCHGTG), 165–172 (CSYCHGTG), 191–198 (CPYCGGTG), and 205–212 (CTTCGGTG).

The protein belongs to the DnaJ family. Homodimer. Zn(2+) is required as a cofactor.

It localises to the cytoplasm. Participates actively in the response to hyperosmotic and heat shock by preventing the aggregation of stress-denatured proteins and by disaggregating proteins, also in an autonomous, DnaK-independent fashion. Unfolded proteins bind initially to DnaJ; upon interaction with the DnaJ-bound protein, DnaK hydrolyzes its bound ATP, resulting in the formation of a stable complex. GrpE releases ADP from DnaK; ATP binding to DnaK triggers the release of the substrate protein, thus completing the reaction cycle. Several rounds of ATP-dependent interactions between DnaJ, DnaK and GrpE are required for fully efficient folding. Also involved, together with DnaK and GrpE, in the DNA replication of plasmids through activation of initiation proteins. This is Chaperone protein DnaJ from Geobacillus sp. (strain WCH70).